A 256-amino-acid polypeptide reads, in one-letter code: Pro-opiomelanocortin (256 aa).

The first 26 residues, 1–26, serve as a signal peptide directing secretion; it reads MPRSCYSRSGTLLLALLLQISMEVRG. Residues cysteine 28 and cysteine 50 are joined by a disulfide bond. O-linked (GalNAc...) threonine glycosylation occurs at threonine 71. Phenylalanine 87 is modified (phenylalanine amide). A disordered region spans residues 88-120; that stretch reads GRGNSSGASQKREEEAAAADPGFHGDGVEPGLR. N-linked (GlcNAc...) asparagine glycosylation is present at asparagine 91. The propeptide occupies 100 to 122; that stretch reads EEEAAAADPGFHGDGVEPGLRED. Serine 125 carries the N-acetylserine; in Corticotropin modification. Residue valine 137 is modified to Valine amide. The residue at position 155 (serine 155) is a Phosphoserine.

It belongs to the POMC family. In terms of processing, specific enzymatic cleavages at paired basic residues yield the different active peptides. In terms of tissue distribution, ACTH and MSH are produced by the pituitary gland.

It localises to the secreted. Functionally, ACTH stimulates the adrenal glands to release cortisol. In terms of biological role, MSH (melanocyte-stimulating hormone) increases the pigmentation of skin by increasing melanin production in melanocytes. Its function is as follows. Beta-endorphin and Met-enkephalin are endogenous opiates. Stimulates the adrenal glands to release cortisol. Functionally, anorexigenic peptide. Increases the pigmentation of skin by increasing melanin production in melanocytes. In terms of biological role, increases the pigmentation of skin by increasing melanin production in melanocytes. Its function is as follows. Endogenous orexigenic opiate. Endogenous opiate. This is Pro-opiomelanocortin (POMC) from Cavia porcellus (Guinea pig).